Reading from the N-terminus, the 162-residue chain is Ribosomal RNA large subunit methyltransferase H (162 aa).

Gly-108 serves as a coordination point for S-adenosyl-L-methionine.

This sequence belongs to the RNA methyltransferase RlmH family. As to quaternary structure, homodimer.

Its subcellular location is the cytoplasm. The catalysed reaction is pseudouridine(1915) in 23S rRNA + S-adenosyl-L-methionine = N(3)-methylpseudouridine(1915) in 23S rRNA + S-adenosyl-L-homocysteine + H(+). Functionally, specifically methylates the pseudouridine at position 1915 (m3Psi1915) in 23S rRNA. The sequence is that of Ribosomal RNA large subunit methyltransferase H from Methylobacterium sp. (strain 4-46).